The sequence spans 463 residues: Xanthone prenyltransferase B (463 aa).

This sequence belongs to the tryptophan dimethylallyltransferase family.

It participates in secondary metabolite biosynthesis. Mn(2+) and Co(2+) strongly enhance prenylation activity. In terms of biological role, dehydrogenase involved in the conversion of monodictyphenone to the prenyl xanthones such as emericellin, shamixanthone and epishamixanthone. Monodictyphenone is first converted to variecoxanthone A via a paeciloxanthone intermediate by the consecutive actions of the FAD-dependent monooxygenase mdpD and the xanthone prenyltransferase xptB. XptB catalyzes regular O-prenylation at the hydroxy group of C-7 of the xanthone ring. Variecoxanthone A is further prenylated to emericellin by xptA before being reduced to shamixanthone and epishamixanthone by the dehydrogenase xptC. This is Xanthone prenyltransferase B from Emericella nidulans (strain FGSC A4 / ATCC 38163 / CBS 112.46 / NRRL 194 / M139) (Aspergillus nidulans).